An 858-amino-acid chain; its full sequence is Neural cell adhesion molecule 1 (858 aa).

The first 19 residues, 1–19 (MLQTKDLIWTLFFLGTAVS), serve as a signal peptide directing secretion. Ig-like C2-type domains are found at residues 20-111 (LQVD…ATVN), 116-205 (QKLM…KDIQ), 212-301 (PTIQ…ATIH), 308-413 (PKIT…LEVQ), and 416-501 (PKLQ…ESLE). Topologically, residues 20–718 (LQVDIVPSQG…IPANGSPTSG (699 aa)) are extracellular. Disulfide bonds link Cys-41-Cys-96 and Cys-139-Cys-189. The N-linked (GlcNAc...) asparagine glycan is linked to Asn-222. An intrachain disulfide couples Cys-235 to Cys-287. N-linked (GlcNAc...) asparagine glycans are attached at residues Asn-315, Asn-347, Asn-433, Asn-459, and Asn-488. Cys-329 and Cys-395 are disulfide-bonded. A disulfide bridge links Cys-436 with Cys-489. 2 Fibronectin type-III domains span residues 509 to 608 (TPSS…TQPV) and 611 to 706 (EPSA…SAQP). The GPI-anchor amidated asparagine moiety is linked to residue Pro-706. Residues 719–739 (LSTGAIVGILIVIFVLLLVVV) traverse the membrane as a helical segment. Topologically, residues 740–858 (DITCYFLNKC…TQTKENESKA (119 aa)) are cytoplasmic. The GPI-anchor amidated asparagine moiety is linked to residue Ile-741. Residues 766–858 (GAKGKDMEEG…TQTKENESKA (93 aa)) form a disordered region. Composition is skewed to basic and acidic residues over residues 768–809 (KGKD…HTEP) and 817–834 (EPEK…ETET). Phosphoserine occurs at positions 780 and 784.

As to quaternary structure, (Microbial infection) Interacts with rabies virus glycoprotein. (Microbial infection) Interacts with Zika virus envelope protein E. In terms of assembly, interacts with MDK. Found in a complex with SLC39A6, SLC39A10 and with NCAM1; this complex controls NCAM1 phosphorylation and integration into focal adhesion complexes during epithelial-tomesenchymal transition. Interacts with synaptic plasticity regulator PANTS. In terms of processing, polysialylated at Asn-459 and Asn-488 by ST8SIA2 and ST8SIA4. Polysialylation modulates cell interactions by confering both attractive and repulsive properties that are highly regulated by ST8SIA2 and ST8SIA4. Polysialylation is formed on a-2,3-linked sialic acid of core glycans.

The protein localises to the cell membrane. It localises to the secreted. Its function is as follows. This protein is a cell adhesion molecule involved in neuron-neuron adhesion, neurite fasciculation, outgrowth of neurites, etc. In terms of biological role, (Microbial infection) Acts as a receptor for rabies virus. (Microbial infection) Acts as a receptor for Zika virus. In Homo sapiens (Human), this protein is Neural cell adhesion molecule 1.